The sequence spans 120 residues: uncharacterized protein (120 aa).

One can recognise an HIT domain in the interval 7 to 120; the sequence is VFAKIITKNL…KLIGLINNND (114 aa). A Histidine triad motif motif is present at residues 101 to 105; the sequence is HFHFH.

This is an uncharacterized protein from Rickettsia prowazekii (strain Madrid E).